Reading from the N-terminus, the 423-residue chain is Protein IQ-DOMAIN 16 (423 aa).

IQ domains lie at 99-127 (RHWA…GIVK) and 128-150 (LQAL…CIKA). The stretch at 231–251 (QKKLEIAIKREKAQALALSNQ) forms a coiled coil. Residues 235–252 (EIAIKREKAQALALSNQI) form a calmodulin-binding region.

It belongs to the IQD family. Binds to multiple calmodulin (CaM) in the presence of Ca(2+) and CaM-like proteins.

The protein resides in the cytoplasm. The protein localises to the cytoskeleton. Its subcellular location is the cell membrane. Functionally, may be involved in cooperative interactions with calmodulins or calmodulin-like proteins. Recruits calmodulin proteins to microtubules, thus being a potential scaffold in cellular signaling and trafficking. Regulates cell shape and elongation in aerial organs (i.e. cotyledons, leaves, and hypocotyls) probably by regulating cortical microtubules (MT) arrays orientation. May associate with nucleic acids and regulate gene expression at the transcriptional or post-transcriptional level. This chain is Protein IQ-DOMAIN 16, found in Arabidopsis thaliana (Mouse-ear cress).